The sequence spans 502 residues: ATP synthase subunit alpha (502 aa).

Residue 169 to 176 (GDRQTGKT) coordinates ATP.

Belongs to the ATPase alpha/beta chains family. As to quaternary structure, F-type ATPases have 2 components, CF(1) - the catalytic core - and CF(0) - the membrane proton channel. CF(1) has five subunits: alpha(3), beta(3), gamma(1), delta(1), epsilon(1). CF(0) has three main subunits: a(1), b(2) and c(9-12). The alpha and beta chains form an alternating ring which encloses part of the gamma chain. CF(1) is attached to CF(0) by a central stalk formed by the gamma and epsilon chains, while a peripheral stalk is formed by the delta and b chains.

The protein resides in the cell inner membrane. The enzyme catalyses ATP + H2O + 4 H(+)(in) = ADP + phosphate + 5 H(+)(out). Functionally, produces ATP from ADP in the presence of a proton gradient across the membrane. The alpha chain is a regulatory subunit. In Nitratidesulfovibrio vulgaris (strain ATCC 29579 / DSM 644 / CCUG 34227 / NCIMB 8303 / VKM B-1760 / Hildenborough) (Desulfovibrio vulgaris), this protein is ATP synthase subunit alpha.